The following is a 123-amino-acid chain: Large ribosomal subunit protein bL12 (123 aa).

It belongs to the bacterial ribosomal protein bL12 family. In terms of assembly, homodimer. Part of the ribosomal stalk of the 50S ribosomal subunit. Forms a multimeric L10(L12)X complex, where L10 forms an elongated spine to which 2 to 4 L12 dimers bind in a sequential fashion. Binds GTP-bound translation factors.

Its function is as follows. Forms part of the ribosomal stalk which helps the ribosome interact with GTP-bound translation factors. Is thus essential for accurate translation. In Borrelia duttonii (strain Ly), this protein is Large ribosomal subunit protein bL12.